The following is a 99-amino-acid chain: Probable non-specific lipid-transfer protein AKCS9 (99 aa).

Residues 1–33 (MTMKMKMKMSVVCAVVVVALFLIDVGPVAEAVT) form the signal peptide. Intrachain disulfides connect Cys34-Cys68, Cys42-Cys56, Cys57-Cys92, and Cys66-Cys99.

It belongs to the plant LTP family. As to expression, expressed in most tissues except nodules.

Functionally, potential lipid transfer protein. The sequence is that of Probable non-specific lipid-transfer protein AKCS9 from Vigna unguiculata (Cowpea).